The chain runs to 151 residues: Small heat shock protein HspD (151 aa).

One can recognise a sHSP domain in the interval 28–138 (RATEDNYPPY…KPRRIAINGA (111 aa)).

It belongs to the small heat shock protein (HSP20) family.

In Bradyrhizobium diazoefficiens (strain JCM 10833 / BCRC 13528 / IAM 13628 / NBRC 14792 / USDA 110), this protein is Small heat shock protein HspD (hspD).